A 556-amino-acid polypeptide reads, in one-letter code: Aplysianin-A (556 aa).

Positions 1 to 19 (MAVRFLALGLLIFVTSCSG) are cleaved as a signal peptide. Residues Asn150, Asn177, Asn374, Asn399, Asn414, and Asn430 are each glycosylated (N-linked (GlcNAc...) asparagine).

The protein to A.fulica achacin protein. As to quaternary structure, homotetramer. Albumen gland.

Its function is as follows. Has antibacterial activity against Gram-negative and Gram-positive bacteria. The polypeptide is Aplysianin-A (Aplysia kurodai (Kuroda's sea hare)).